Reading from the N-terminus, the 317-residue chain is Acetyl-coenzyme A carboxylase carboxyl transferase subunit alpha (317 aa).

A CoA carboxyltransferase C-terminal domain is found at 40–293; that stretch reads LEGRVRDAMV…EAVIGDALKE (254 aa).

This sequence belongs to the AccA family. Acetyl-CoA carboxylase is a heterohexamer composed of biotin carboxyl carrier protein (AccB), biotin carboxylase (AccC) and two subunits each of ACCase subunit alpha (AccA) and ACCase subunit beta (AccD).

The protein localises to the cytoplasm. It carries out the reaction N(6)-carboxybiotinyl-L-lysyl-[protein] + acetyl-CoA = N(6)-biotinyl-L-lysyl-[protein] + malonyl-CoA. It participates in lipid metabolism; malonyl-CoA biosynthesis; malonyl-CoA from acetyl-CoA: step 1/1. Component of the acetyl coenzyme A carboxylase (ACC) complex. First, biotin carboxylase catalyzes the carboxylation of biotin on its carrier protein (BCCP) and then the CO(2) group is transferred by the carboxyltransferase to acetyl-CoA to form malonyl-CoA. The protein is Acetyl-coenzyme A carboxylase carboxyl transferase subunit alpha of Sinorhizobium medicae (strain WSM419) (Ensifer medicae).